A 407-amino-acid chain; its full sequence is Semenogelin-2 (407 aa).

Positions 1 to 23 (MKSIILFVLSLVLILEKQAAVMG) are cleaved as a signal peptide. Disordered regions lie at residues 25–60 (KDGSKGQLPSGSSQFPHGQKGQHYFGQKDQQHTKSK), 133–158 (GQAHCGTQNPSQDQGNSPSGKGLSSQ), 173–192 (KEQASASGAQKGRTQGGSQS), and 272–407 (NLNQ…NKIS). 3 stretches are compositionally biased toward polar residues: residues 31–40 (QLPSGSSQFP), 137–158 (CGTQNPSQDQGNSPSGKGLSSQ), and 174–192 (EQASASGAQKGRTQGGSQS). Residues 292-310 (RTEERQLNHGEKSVQKDVS) are compositionally biased toward basic and acidic residues. Polar residues predominate over residues 325–334 (KSQNQVTIHS). Basic and acidic residues predominate over residues 335–345 (QDQEHGHKENK). The span at 372 to 397 (GSISIQTEEQIHGKSQNXVRIPSQAQ) shows a compositional bias: polar residues.

This sequence belongs to the semenogelin family. As to quaternary structure, interacts with SERPINA5.

The protein resides in the secreted. Functionally, participates in the formation of a gel matrix (sperm coagulum) entrapping the accessory gland secretions and ejaculated spermatozoa. The chain is Semenogelin-2 (SEMG2) from Pan troglodytes (Chimpanzee).